Here is a 105-residue protein sequence, read N- to C-terminus: MAAAKIKKGDTVVVRSGKDKGRSGTVLQVLPKDEKVVVQGVNIAARHRKPSQQNPQGGIDRFEAPLHISKVSVADKDGKPTRVRFETKDGKKVRVAVKSGETIDG.

It belongs to the universal ribosomal protein uL24 family. As to quaternary structure, part of the 50S ribosomal subunit.

Functionally, one of two assembly initiator proteins, it binds directly to the 5'-end of the 23S rRNA, where it nucleates assembly of the 50S subunit. One of the proteins that surrounds the polypeptide exit tunnel on the outside of the subunit. In Novosphingobium aromaticivorans (strain ATCC 700278 / DSM 12444 / CCUG 56034 / CIP 105152 / NBRC 16084 / F199), this protein is Large ribosomal subunit protein uL24.